A 435-amino-acid polypeptide reads, in one-letter code: Serine--tRNA ligase (435 aa).

237–239 (TAE) lines the L-serine pocket. ATP is bound at residue 268–270 (RSE). Glutamate 291 contributes to the L-serine binding site. Position 355 to 358 (355 to 358 (EISS)) interacts with ATP. Serine 390 lines the L-serine pocket.

It belongs to the class-II aminoacyl-tRNA synthetase family. Type-1 seryl-tRNA synthetase subfamily. In terms of assembly, homodimer. The tRNA molecule binds across the dimer.

It is found in the cytoplasm. The catalysed reaction is tRNA(Ser) + L-serine + ATP = L-seryl-tRNA(Ser) + AMP + diphosphate + H(+). The enzyme catalyses tRNA(Sec) + L-serine + ATP = L-seryl-tRNA(Sec) + AMP + diphosphate + H(+). It functions in the pathway aminoacyl-tRNA biosynthesis; selenocysteinyl-tRNA(Sec) biosynthesis; L-seryl-tRNA(Sec) from L-serine and tRNA(Sec): step 1/1. In terms of biological role, catalyzes the attachment of serine to tRNA(Ser). Is also able to aminoacylate tRNA(Sec) with serine, to form the misacylated tRNA L-seryl-tRNA(Sec), which will be further converted into selenocysteinyl-tRNA(Sec). The protein is Serine--tRNA ligase of Lactobacillus acidophilus (strain ATCC 700396 / NCK56 / N2 / NCFM).